The sequence spans 431 residues: 5-methylthioadenosine/S-adenosylhomocysteine deaminase (431 aa).

Zn(2+)-binding residues include histidine 61 and histidine 63. Residues glutamate 90 and histidine 183 each contribute to the substrate site. Histidine 210 lines the Zn(2+) pocket. Positions 213 and 298 each coordinate substrate. Aspartate 298 contributes to the Zn(2+) binding site.

Belongs to the metallo-dependent hydrolases superfamily. MTA/SAH deaminase family. Zn(2+) is required as a cofactor.

It carries out the reaction S-adenosyl-L-homocysteine + H2O + H(+) = S-inosyl-L-homocysteine + NH4(+). The catalysed reaction is S-methyl-5'-thioadenosine + H2O + H(+) = S-methyl-5'-thioinosine + NH4(+). Catalyzes the deamination of 5-methylthioadenosine and S-adenosyl-L-homocysteine into 5-methylthioinosine and S-inosyl-L-homocysteine, respectively. Is also able to deaminate adenosine. The chain is 5-methylthioadenosine/S-adenosylhomocysteine deaminase from Halobacterium salinarum (strain ATCC 700922 / JCM 11081 / NRC-1) (Halobacterium halobium).